A 355-amino-acid chain; its full sequence is Uroporphyrinogen decarboxylase (355 aa).

Residues 27–31 (RQAGR), Phe46, Asp77, Tyr154, Thr209, and His328 each bind substrate.

This sequence belongs to the uroporphyrinogen decarboxylase family. As to quaternary structure, homodimer.

It is found in the cytoplasm. It carries out the reaction uroporphyrinogen III + 4 H(+) = coproporphyrinogen III + 4 CO2. Its pathway is porphyrin-containing compound metabolism; protoporphyrin-IX biosynthesis; coproporphyrinogen-III from 5-aminolevulinate: step 4/4. Functionally, catalyzes the decarboxylation of four acetate groups of uroporphyrinogen-III to yield coproporphyrinogen-III. The protein is Uroporphyrinogen decarboxylase of Vibrio vulnificus (strain CMCP6).